A 530-amino-acid polypeptide reads, in one-letter code: Bifunctional purine biosynthesis protein PurH (530 aa).

The 148-residue stretch at 1 to 148 (MNNARPIHRA…KNHKDVAIVV (148 aa)) folds into the MGS-like domain.

The protein belongs to the PurH family.

It carries out the reaction (6R)-10-formyltetrahydrofolate + 5-amino-1-(5-phospho-beta-D-ribosyl)imidazole-4-carboxamide = 5-formamido-1-(5-phospho-D-ribosyl)imidazole-4-carboxamide + (6S)-5,6,7,8-tetrahydrofolate. The enzyme catalyses IMP + H2O = 5-formamido-1-(5-phospho-D-ribosyl)imidazole-4-carboxamide. Its pathway is purine metabolism; IMP biosynthesis via de novo pathway; 5-formamido-1-(5-phospho-D-ribosyl)imidazole-4-carboxamide from 5-amino-1-(5-phospho-D-ribosyl)imidazole-4-carboxamide (10-formyl THF route): step 1/1. The protein operates within purine metabolism; IMP biosynthesis via de novo pathway; IMP from 5-formamido-1-(5-phospho-D-ribosyl)imidazole-4-carboxamide: step 1/1. The protein is Bifunctional purine biosynthesis protein PurH of Vibrio cholerae serotype O1 (strain M66-2).